The chain runs to 113 residues: Carboxysome shell protein CcmK1 (113 aa).

A BMC domain is found at 4 to 90 (AVGMIETLGF…PHENLEYVLP (87 aa)).

It belongs to the bacterial microcompartments protein family. CcmK subfamily. In terms of assembly, homohexamer. Interacts preferentially with CcmK2 and CcmK4a rather than itself in vitro.

It localises to the carboxysome. Its function is as follows. One of the shell proteins of the carboxysome, a polyhedral inclusion where RuBisCO (ribulose bisphosphate carboxylase, rbcL-rbcS) is sequestered. Assembles into hexamers which make sheets that form the facets of the polyhedral carboxysome. The hexamer central pore probably regulates metabolite flux. This chain is Carboxysome shell protein CcmK1, found in Thermosynechococcus vestitus (strain NIES-2133 / IAM M-273 / BP-1).